Reading from the N-terminus, the 112-residue chain is Cornifelin homolog (112 aa).

It belongs to the cornifelin family.

This Danio rerio (Zebrafish) protein is Cornifelin homolog (cnfn).